Here is a 173-residue protein sequence, read N- to C-terminus: NADH-ubiquinone oxidoreductase chain 6 (173 aa).

The next 5 membrane-spanning stretches (helical) occupy residues 1–21 (MTYFMFFLGLCFVLGGLAVAS), 27–47 (YGVVGLVLASVAGCGWLLSLG), 48–68 (ISFVSLVLFMVYLGGMLVVFV), 87–107 (VIGYGAGFVGVLMVGMVIGGF), and 139–159 (CGVGMFLVAGWGLLLTLFVVL).

Belongs to the complex I subunit 6 family.

It is found in the mitochondrion membrane. The catalysed reaction is a ubiquinone + NADH + 5 H(+)(in) = a ubiquinol + NAD(+) + 4 H(+)(out). Core subunit of the mitochondrial membrane respiratory chain NADH dehydrogenase (Complex I) that is believed to belong to the minimal assembly required for catalysis. Complex I functions in the transfer of electrons from NADH to the respiratory chain. The immediate electron acceptor for the enzyme is believed to be ubiquinone. The polypeptide is NADH-ubiquinone oxidoreductase chain 6 (MT-ND6) (Alca torda (Razorbill)).